Reading from the N-terminus, the 467-residue chain is Inactive pancreatic lipase-related protein 1 (467 aa).

The first 17 residues, 1 to 17 (MVSIWTIALFLLGAAKA), serve as a signal peptide directing secretion. Cystine bridges form between Cys21-Cys27 and Cys109-Cys120. Asn157 carries N-linked (GlcNAc...) asparagine glycosylation. The active-site Nucleophile is the Ser171. The Charge relay system role is filled by Asp194. Glu205, Arg208, Asp210, and Asp213 together coordinate Ca(2+). Residues Cys255 and Cys279 are joined by a disulfide bond. The active-site Charge relay system is His281. 3 disulfide bridges follow: Cys303–Cys314, Cys317–Cys322, and Cys451–Cys467. Residues 356 to 467 (WRYGVSITLS…EDVLLTLTPC (112 aa)) form the PLAT domain.

Belongs to the AB hydrolase superfamily. Lipase family. As to expression, detected in pancreas (at protein level).

The protein resides in the secreted. Its function is as follows. May function as inhibitor of dietary triglyceride digestion. Lacks detectable lipase activity towards triglycerides, diglycerides, phosphatidylcholine, galactolipids or cholesterol esters (in vitro). The chain is Inactive pancreatic lipase-related protein 1 (PNLIPRP1) from Canis lupus familiaris (Dog).